A 425-amino-acid chain; its full sequence is Serine--tRNA ligase (425 aa).

233-235 (TAE) contributes to the L-serine binding site. 264 to 266 (RRE) serves as a coordination point for ATP. E287 is a binding site for L-serine. Residue 351 to 354 (EISS) participates in ATP binding. S385 provides a ligand contact to L-serine.

Belongs to the class-II aminoacyl-tRNA synthetase family. Type-1 seryl-tRNA synthetase subfamily. As to quaternary structure, homodimer. The tRNA molecule binds across the dimer.

The protein resides in the cytoplasm. The enzyme catalyses tRNA(Ser) + L-serine + ATP = L-seryl-tRNA(Ser) + AMP + diphosphate + H(+). The catalysed reaction is tRNA(Sec) + L-serine + ATP = L-seryl-tRNA(Sec) + AMP + diphosphate + H(+). Its pathway is aminoacyl-tRNA biosynthesis; selenocysteinyl-tRNA(Sec) biosynthesis; L-seryl-tRNA(Sec) from L-serine and tRNA(Sec): step 1/1. Functionally, catalyzes the attachment of serine to tRNA(Ser). Is also able to aminoacylate tRNA(Sec) with serine, to form the misacylated tRNA L-seryl-tRNA(Sec), which will be further converted into selenocysteinyl-tRNA(Sec). The sequence is that of Serine--tRNA ligase from Prochlorococcus marinus (strain MIT 9515).